A 268-amino-acid chain; its full sequence is Homeobox protein CDX-1 (268 aa).

The disordered stretch occupies residues 1–152 (MYVGYVLDKD…AGGGGSGKTR (152 aa)). Composition is skewed to pro residues over residues 29–42 (TYAP…PPQY) and 54–67 (APAP…PFPA). The segment covering 73–91 (AAAYGPGPTASAASPAPLA) has biased composition (low complexity). The span at 92–108 (FGPPPDFSPVPAPPGPG) shows a compositional bias: pro residues. Positions 115-128 (SLGAPGAPSSPGAP) are enriched in low complexity. The homeobox DNA-binding region spans 154–213 (KDKYRVVYTDHQRLELEKEFHYSRYITIRRKSELAANLGLTERQVKIWFQNRRAKERKVN). The interaction with DNA stretch occupies residues 157 to 178 (YRVVYTDHQRLELEKEFHYSRY). The interval 196-207 (RQVKIWFQNRRA) is interaction with 5-mCpG DNA. The segment at 209 to 268 (ERKVNKKKQQQQQPLPPTQLPLPLDGTPTPSGPPLGSLCPTNAGLLGTPSPVPVKEEFLP) is disordered. The span at 229–246 (PLPLDGTPTPSGPPLGSL) shows a compositional bias: low complexity.

The protein belongs to the Caudal homeobox family. As to expression, intestinal epithelium.

It localises to the nucleus. In terms of biological role, plays a role in transcriptional regulation. Involved in activated KRAS-mediated transcriptional activation of PRKD1 in colorectal cancer (CRC) cells. Binds to the PRKD1 promoter in colorectal cancer (CRC) cells. Could play a role in the terminal differentiation of the intestine. Binds preferentially to methylated DNA. The protein is Homeobox protein CDX-1 (Cdx1) of Mus musculus (Mouse).